The chain runs to 78 residues: Exodeoxyribonuclease 7 small subunit (78 aa).

This sequence belongs to the XseB family. In terms of assembly, heterooligomer composed of large and small subunits.

The protein resides in the cytoplasm. It carries out the reaction Exonucleolytic cleavage in either 5'- to 3'- or 3'- to 5'-direction to yield nucleoside 5'-phosphates.. Its function is as follows. Bidirectionally degrades single-stranded DNA into large acid-insoluble oligonucleotides, which are then degraded further into small acid-soluble oligonucleotides. This is Exodeoxyribonuclease 7 small subunit from Idiomarina loihiensis (strain ATCC BAA-735 / DSM 15497 / L2-TR).